Here is a 236-residue protein sequence, read N- to C-terminus: DNA repair protein RecO (236 aa).

It belongs to the RecO family.

Functionally, involved in DNA repair and RecF pathway recombination. The protein is DNA repair protein RecO of Haemophilus influenzae (strain 86-028NP).